We begin with the raw amino-acid sequence, 355 residues long: Poly(3-hydroxyalkanoate) polymerase subunit PhaC (355 aa).

The 266-residue stretch at 69–334 (PLLIVYALVN…LAFPGGHIGI (266 aa)) folds into the AB hydrolase-1 domain. Cysteine 149 is a catalytic residue.

The protein belongs to the PHA/PHB synthase family. Type III PhaC subfamily. As to quaternary structure, a large complex of PhaC and PhaE; the ratio of the subunits has been estimated to be from 1:1 to 4:1, with more PhaE than PhaC.

It localises to the cytoplasm. The enzyme catalyses (3R)-3-hydroxybutanoyl-CoA + [(3R)-hydroxybutanoate](n) = [(3R)-hydroxybutanoate](n+1) + CoA. Its pathway is biopolymer metabolism; poly-(R)-3-hydroxybutanoate biosynthesis. Its function is as follows. Polymerizes D(-)-3-hydroxybutyryl-CoA to create polyhydroxybutyrate (PHB) which consists of thousands of hydroxybutyrate molecules linked end to end. This subunit has catalytic activity that is enhanced 100-fold by PhaE, the non-catalytic subunit. This Allochromatium vinosum (strain ATCC 17899 / DSM 180 / NBRC 103801 / NCIMB 10441 / D) (Chromatium vinosum) protein is Poly(3-hydroxyalkanoate) polymerase subunit PhaC.